The chain runs to 317 residues: Olfactory receptor 5K17 (317 aa).

Over 1–28 (MMKANHSLTVEFILIGFSDHTDLKTLLF) the chain is Extracellular. A glycan (N-linked (GlcNAc...) asparagine) is linked at N5. A helical transmembrane segment spans residues 29-49 (LLFSAIYLVTIVGNLGLVALI). The Cytoplasmic segment spans residues 50 to 56 (YMEPRLH). The chain crosses the membrane as a helical span at residues 57–77 (TPMYIFLGNLALMDSCCSCAI). At 78 to 93 (TPKMLENFFSVDRRIS) the chain is on the extracellular side. A helical membrane pass occupies residues 94 to 114 (LYECMVQFYFLCLAETADCFL). A disulfide bridge connects residues C97 and C189. The Cytoplasmic portion of the chain corresponds to 115-144 (LAAMAYDRYVAICNPLQYHTMMSKKLSIQM). Residues 145-165 (SIGTFIASNLHSLIHTGCLLR) traverse the membrane as a helical segment. At 166 to 198 (LNFCKSRRIDHFFCDILPLYKLSCTDPFINELM) the chain is on the extracellular side. A helical transmembrane segment spans residues 199–219 (LYIFSMPIQVFTITTVLVSYS). Over 220–239 (CILLTVFKMKSKDGRGKAFS) the chain is Cytoplasmic. Residues 240–259 (TCASHFFSVSIFYICLLMYI) form a helical membrane-spanning segment. Residues 260–268 (GPSKNSNKD) are Extracellular-facing. Residues 269 to 289 (IPVGVFYTIVIPLLNPFIYSL) form a helical membrane-spanning segment. Over 290–317 (RNKEVVNAVKKVMKTHSIFKNSSASIAH) the chain is Cytoplasmic.

This sequence belongs to the G-protein coupled receptor 1 family.

It is found in the cell membrane. Functionally, potential odorant receptor. This chain is Olfactory receptor 5K17, found in Mus musculus (Mouse).